We begin with the raw amino-acid sequence, 152 residues long: Nucleoside diphosphate kinase A (152 aa).

K12, F60, R88, and T94 together coordinate ATP. Residue K100 forms a Glycyl lysine isopeptide (Lys-Gly) (interchain with G-Cter in ubiquitin) linkage. R105 and N115 together coordinate ATP. The Pros-phosphohistidine intermediate role is filled by H118. Residues S120, S122, and S125 each carry the phosphoserine modification.

It belongs to the NDK family. As to quaternary structure, hexamer of two different chains: An and B (A6, A5B, A4B2, A3B3, A2B4, AB5, B6). Interacts with PRUNE1. Component of the SET complex, composed of at least ANP32A, APEX1, HMGB2, NME1, SET and TREX1. Within this complex, interacts directly with SET. Also interacts with TREX1, but only following translocation to the nucleus. Requires Mg(2+) as cofactor. Isoform 1 is expressed in heart, brain, placenta, lung, liver, skeletal muscle, pancreas, spleen and thymus. Expressed in lung carcinoma cell lines but not in normal lung tissues. Isoform 2 is ubiquitously expressed and its expression is also related to tumor differentiation.

The protein resides in the cytoplasm. Its subcellular location is the nucleus. The catalysed reaction is a 2'-deoxyribonucleoside 5'-diphosphate + ATP = a 2'-deoxyribonucleoside 5'-triphosphate + ADP. The enzyme catalyses a ribonucleoside 5'-diphosphate + ATP = a ribonucleoside 5'-triphosphate + ADP. Its activity is regulated as follows. Autophosphorylation at His-118 increases serine/threonine protein kinase activity of the enzyme. Interaction with the SET complex inhibits the endonuclease activity. Its function is as follows. Major role in the synthesis of nucleoside triphosphates other than ATP. The ATP gamma phosphate is transferred to the NDP beta phosphate via a ping-pong mechanism, using a phosphorylated active-site intermediate. Possesses nucleoside-diphosphate kinase, serine/threonine-specific protein kinase, geranyl and farnesyl pyrophosphate kinase, histidine protein kinase and 3'-5' exonuclease activities. Involved in cell proliferation, differentiation and development, signal transduction, G protein-coupled receptor endocytosis, and gene expression. Required for neural development including neural patterning and cell fate determination. During GZMA-mediated cell death, works in concert with TREX1. NME1 nicks one strand of DNA and TREX1 removes bases from the free 3' end to enhance DNA damage and prevent DNA end reannealing and rapid repair. The polypeptide is Nucleoside diphosphate kinase A (NME1) (Homo sapiens (Human)).